Reading from the N-terminus, the 255-residue chain is Probable transcriptional regulatory protein Rcas_0718 (255 aa).

It belongs to the TACO1 family.

It is found in the cytoplasm. In Roseiflexus castenholzii (strain DSM 13941 / HLO8), this protein is Probable transcriptional regulatory protein Rcas_0718.